The primary structure comprises 444 residues: MGKGGNQGEGSTELQAPMPTFRWEEIQKHNLRTDRWLVIDRKVYNVTKWSQRHPGGHRVIGHYSGEDATDAFRAFHLDLDFVGKFLKPLLIGELAPEEPSLDRGKSSQITEDFRALKKTAEDMNLFKTNHLFFFLLLSHIIVMESIAWFILSYFGNGWIPTVITAFVLATSQAQAGWLQHDYGHLSVYKKSIWNHIVHKFVIGHLKGASANWWNHRHFQHHAKPNIFHKDPDIKSLHVFVLGEWQPLEYGKKKLKYLPYNHQHEYFFLIGPPLLIPMYFQYQIIMTMIRRRDWVDLAWAISYYARFFYTYIPFYGILGALVFLNFIRFLESHWFVWVTQMNHIVMEIDLDHYRDWFSSQLAATCNVEQSFFNDWFSGHLNFQIEHHLFPTMPRHNLHKIAPLVKSLCAKHGIEYQEKPLLRALLDIVSSLKKSGELWLDAYLHK.

At 1 to 130 (MGKGGNQGEG…EDMNLFKTNH (130 aa)) the chain is on the cytoplasmic side. The Cytochrome b5 heme-binding domain maps to 18 to 95 (MPTFRWEEIQ…LKPLLIGELA (78 aa)). Residues 131–151 (LFFFLLLSHIIVMESIAWFIL) form a helical membrane-spanning segment. The Lumenal segment spans residues 152 to 157 (SYFGNG). Residues 158–178 (WIPTVITAFVLATSQAQAGWL) traverse the membrane as a helical segment. Residues 179–264 (QHDYGHLSVY…KYLPYNHQHE (86 aa)) lie on the Cytoplasmic side of the membrane. A Histidine box-1 motif is present at residues 180-184 (HDYGH). The short motif at 217 to 221 (HFQHH) is the Histidine box-2 element. Residues 265–285 (YFFLIGPPLLIPMYFQYQIIM) form a helical membrane-spanning segment. Residues 286-305 (TMIRRRDWVDLAWAISYYAR) lie on the Lumenal side of the membrane. Residues 306–326 (FFYTYIPFYGILGALVFLNFI) traverse the membrane as a helical segment. Residues 327-444 (RFLESHWFVW…ELWLDAYLHK (118 aa)) are Cytoplasmic-facing. The Histidine box-3 signature appears at 382–386 (QIEHH).

It belongs to the fatty acid desaturase type 1 family. In terms of tissue distribution, expressed in the liver and brain (at protein level). Highest activity is found in the liver and adrenals followed by the testes and other organs, absent in adipose tissue.

Its subcellular location is the endoplasmic reticulum membrane. The protein resides in the microsome membrane. It carries out the reaction (9Z,12Z)-octadecadienoyl-CoA + 2 Fe(II)-[cytochrome b5] + O2 + 2 H(+) = (6Z,9Z,12Z)-octadecatrienoyl-CoA + 2 Fe(III)-[cytochrome b5] + 2 H2O. The catalysed reaction is (9Z,12Z,15Z)-octadecatrienoyl-CoA + 2 Fe(II)-[cytochrome b5] + O2 + 2 H(+) = (6Z,9Z,12Z,15Z)-octadecatetraenoyl-CoA + 2 Fe(III)-[cytochrome b5] + 2 H2O. It catalyses the reaction (9Z,12Z,15Z,18Z,21Z)-tetracosapentaenoyl-CoA + 2 Fe(II)-[cytochrome b5] + O2 + 2 H(+) = (6Z,9Z,12Z,15Z,18Z,21Z)-tetracosahexaenoyl-CoA + 2 Fe(III)-[cytochrome b5] + 2 H2O. The enzyme catalyses (11E)-octadecenoyl-CoA + 2 Fe(II)-[cytochrome b5] + O2 + 2 H(+) = (6Z,11E)-octadecadienoyl-CoA + 2 Fe(III)-[cytochrome b5] + 2 H2O. It carries out the reaction (11Z,14Z)-eicosadienoyl-CoA + 2 Fe(II)-[cytochrome b5] + O2 + 2 H(+) = (8Z,11Z,14Z)-eicosatrienoyl-CoA + 2 Fe(III)-[cytochrome b5] + 2 H2O. The catalysed reaction is (11Z,14Z,17Z)-eicosatrienoyl-CoA + 2 Fe(II)-[cytochrome b5] + O2 + 2 H(+) = (8Z,11Z,14Z,17Z)-eicosatetraenoyl-CoA + 2 Fe(III)-[cytochrome b5] + 2 H2O. It functions in the pathway lipid metabolism; polyunsaturated fatty acid biosynthesis. Involved in the biosynthesis of highly unsaturated fatty acids (HUFA) from the essential polyunsaturated fatty acids (PUFA) linoleic acid (LA) (18:2n-6) and alpha-linolenic acid (ALA) (18:3n-3) precursors, acting as a fatty acyl-coenzyme A (CoA) desaturase that introduces a cis double bond at carbon 6 of the fatty acyl chain. Catalyzes the first and rate limiting step in this pathway which is the desaturation of LA (18:2n-6) and ALA (18:3n-3) into gamma-linoleate (GLA) (18:3n-6) and stearidonate (18:4n-3), respectively. Subsequently, in the biosynthetic pathway of HUFA n-3 series, it desaturates tetracosapentaenoate (24:5n-3) to tetracosahexaenoate (24:6n-3), which is then converted to docosahexaenoate (DHA)(22:6n-3), an important lipid for nervous system function. It can also desaturate (11E)-octadecenoate (trans-vaccenoate) at carbon 6 generating (6Z,11E)-octadecadienoate. In addition to Delta-6 activity, this enzyme exhibits Delta-8 activity with slight biases toward n-3 fatty acyl-CoA substrates. The chain is Acyl-CoA 6-desaturase (Fads2) from Rattus norvegicus (Rat).